Here is a 403-residue protein sequence, read N- to C-terminus: Methylthioribose-1-phosphate isomerase (403 aa).

Catalysis depends on Asp-280, which acts as the Proton donor.

The protein belongs to the eIF-2B alpha/beta/delta subunits family. MtnA subfamily.

The protein resides in the cytoplasm. It is found in the nucleus. The catalysed reaction is 5-(methylsulfanyl)-alpha-D-ribose 1-phosphate = 5-(methylsulfanyl)-D-ribulose 1-phosphate. Its pathway is amino-acid biosynthesis; L-methionine biosynthesis via salvage pathway; L-methionine from S-methyl-5-thio-alpha-D-ribose 1-phosphate: step 1/6. Its function is as follows. Catalyzes the interconversion of methylthioribose-1-phosphate (MTR-1-P) into methylthioribulose-1-phosphate (MTRu-1-P). The chain is Methylthioribose-1-phosphate isomerase from Eremothecium gossypii (strain ATCC 10895 / CBS 109.51 / FGSC 9923 / NRRL Y-1056) (Yeast).